Reading from the N-terminus, the 474-residue chain is Phenylalanine--tRNA ligase alpha subunit (474 aa).

L-phenylalanine-binding positions include threonine 317, 356-358 (QLE), and tyrosine 396. Residue glutamate 398 participates in Mg(2+) binding. Phenylalanine 421 is a binding site for L-phenylalanine.

Belongs to the class-II aminoacyl-tRNA synthetase family. Phe-tRNA synthetase alpha subunit type 2 subfamily. In terms of assembly, tetramer of two alpha and two beta subunits. The cofactor is Mg(2+).

The protein resides in the cytoplasm. The enzyme catalyses tRNA(Phe) + L-phenylalanine + ATP = L-phenylalanyl-tRNA(Phe) + AMP + diphosphate + H(+). The sequence is that of Phenylalanine--tRNA ligase alpha subunit from Methanocorpusculum labreanum (strain ATCC 43576 / DSM 4855 / Z).